We begin with the raw amino-acid sequence, 258 residues long: Neurotrophin-3 (258 aa).

The first 18 residues, 1–18, serve as a signal peptide directing secretion; sequence MSILFYVIFLAYLRGIQG. Positions 19–139 are excised as a propeptide; it reads NNMDQRSLPE…TNRTSPRRKR (121 aa). The interval 60–85 is disordered; sequence QSTLPKAEAPREPEQGEATRSEFQPM. Residues 67-79 are compositionally biased toward basic and acidic residues; that stretch reads EAPREPEQGEATR. N-linked (GlcNAc...) asparagine glycosylation is present at asparagine 131. 3 disulfide bridges follow: cysteine 153–cysteine 218, cysteine 196–cysteine 247, and cysteine 206–cysteine 249.

The protein belongs to the NGF-beta family. As to expression, brain and peripheral tissues.

It is found in the secreted. Seems to promote the survival of visceral and proprioceptive sensory neurons. The protein is Neurotrophin-3 (Ntf3) of Rattus norvegicus (Rat).